The following is a 239-amino-acid chain: Purine nucleoside phosphorylase DeoD-type (239 aa).

An a purine D-ribonucleoside-binding site is contributed by His5. Phosphate-binding positions include Gly21, Arg25, Arg44, and 88 to 91 (RVGS). A purine D-ribonucleoside contacts are provided by residues 180 to 182 (EME) and 204 to 205 (SD). The Proton donor role is filled by Asp205.

This sequence belongs to the PNP/UDP phosphorylase family. As to quaternary structure, homohexamer; trimer of homodimers.

It catalyses the reaction a purine D-ribonucleoside + phosphate = a purine nucleobase + alpha-D-ribose 1-phosphate. The enzyme catalyses a purine 2'-deoxy-D-ribonucleoside + phosphate = a purine nucleobase + 2-deoxy-alpha-D-ribose 1-phosphate. Catalyzes the reversible phosphorolytic breakdown of the N-glycosidic bond in the beta-(deoxy)ribonucleoside molecules, with the formation of the corresponding free purine bases and pentose-1-phosphate. This chain is Purine nucleoside phosphorylase DeoD-type, found in Salmonella choleraesuis (strain SC-B67).